Here is a 264-residue protein sequence, read N- to C-terminus: DNA repair protein RecO (264 aa).

Belongs to the RecO family.

Its function is as follows. Involved in DNA repair and RecF pathway recombination. The chain is DNA repair protein RecO from Prosthecochloris aestuarii (strain DSM 271 / SK 413).